A 211-amino-acid chain; its full sequence is 3-demethoxyubiquinol 3-hydroxylase (211 aa).

6 residues coordinate Fe cation: glutamate 60, glutamate 90, histidine 93, glutamate 142, glutamate 174, and histidine 177.

This sequence belongs to the COQ7 family. Fe cation is required as a cofactor.

It is found in the cell membrane. It carries out the reaction a 5-methoxy-2-methyl-3-(all-trans-polyprenyl)benzene-1,4-diol + AH2 + O2 = a 3-demethylubiquinol + A + H2O. It participates in cofactor biosynthesis; ubiquinone biosynthesis. Catalyzes the hydroxylation of 2-nonaprenyl-3-methyl-6-methoxy-1,4-benzoquinol during ubiquinone biosynthesis. This chain is 3-demethoxyubiquinol 3-hydroxylase, found in Francisella tularensis subsp. holarctica (strain FTNF002-00 / FTA).